The chain runs to 257 residues: Zinc transporter ZupT (257 aa).

The next 3 helical transmembrane spans lie at Leu-5–Gly-25, Leu-32–Met-52, and Gly-61–Leu-81. Fe(2+) contacts are provided by Asn-120 and Glu-123. 2 residues coordinate Zn(2+): Glu-123 and His-148. 4 helical membrane-spanning segments follow: residues Leu-137–Ala-157, Ile-171–Ile-191, Met-195–Leu-215, and Gly-236–Ile-256. Asn-149, Glu-152, and Glu-181 together coordinate Fe(2+). Zn(2+) is bound at residue Glu-152.

Belongs to the ZIP transporter (TC 2.A.5) family. ZupT subfamily.

It localises to the cell inner membrane. The enzyme catalyses Zn(2+)(in) = Zn(2+)(out). In terms of biological role, mediates zinc uptake. May also transport other divalent cations. The chain is Zinc transporter ZupT from Escherichia coli O81 (strain ED1a).